The primary structure comprises 1049 residues: Carbamoyl phosphate synthase large chain (1049 aa).

The interval 1–399 is carboxyphosphate synthetic domain; it reads MRESVRKVLV…SLQKAVRMLD (399 aa). Residues arginine 127, arginine 167, glycine 173, glycine 174, lysine 206, leucine 208, glutamate 213, glycine 239, valine 240, histidine 241, glutamine 282, and glutamate 296 each contribute to the ATP site. An ATP-grasp 1 domain is found at 131-325; it reads RETMINVGLP…LAYVSAKLAL (195 aa). Positions 282, 296, and 298 each coordinate Mg(2+). Glutamine 282, glutamate 296, and asparagine 298 together coordinate Mn(2+). Positions 400–548 are oligomerization domain; that stretch reads IGEPGVVGGK…LTYNGTEDDI (149 aa). The tract at residues 549–930 is carbamoyl phosphate synthetic domain; that stretch reads EFSEAGNKLL…LKSWLSSSPN (382 aa). The ATP-grasp 2 domain occupies 674 to 864; it reads SKLLDKLGIK…IISLALDGIL (191 aa). ATP is bound by residues arginine 710, lysine 749, leucine 751, glutamate 756, glycine 780, valine 781, histidine 782, serine 783, glutamine 823, and glutamate 835. Residues glutamine 823, glutamate 835, and asparagine 837 each contribute to the Mg(2+) site. Mn(2+) is bound by residues glutamine 823, glutamate 835, and asparagine 837. The MGS-like domain maps to 930 to 1049; it reads NKIPNKEGIA…YEISEYGAGI (120 aa). An allosteric domain region spans residues 931–1049; it reads KIPNKEGIAL…YEISEYGAGI (119 aa).

This sequence belongs to the CarB family. As to quaternary structure, composed of two chains; the small (or glutamine) chain promotes the hydrolysis of glutamine to ammonia, which is used by the large (or ammonia) chain to synthesize carbamoyl phosphate. Tetramer of heterodimers (alpha,beta)4. It depends on Mg(2+) as a cofactor. Mn(2+) is required as a cofactor.

It catalyses the reaction hydrogencarbonate + L-glutamine + 2 ATP + H2O = carbamoyl phosphate + L-glutamate + 2 ADP + phosphate + 2 H(+). It carries out the reaction hydrogencarbonate + NH4(+) + 2 ATP = carbamoyl phosphate + 2 ADP + phosphate + 2 H(+). The protein operates within amino-acid biosynthesis; L-arginine biosynthesis; carbamoyl phosphate from bicarbonate: step 1/1. It participates in pyrimidine metabolism; UMP biosynthesis via de novo pathway; (S)-dihydroorotate from bicarbonate: step 1/3. In terms of biological role, large subunit of the glutamine-dependent carbamoyl phosphate synthetase (CPSase). CPSase catalyzes the formation of carbamoyl phosphate from the ammonia moiety of glutamine, carbonate, and phosphate donated by ATP, constituting the first step of 2 biosynthetic pathways, one leading to arginine and/or urea and the other to pyrimidine nucleotides. The large subunit (synthetase) binds the substrates ammonia (free or transferred from glutamine from the small subunit), hydrogencarbonate and ATP and carries out an ATP-coupled ligase reaction, activating hydrogencarbonate by forming carboxy phosphate which reacts with ammonia to form carbamoyl phosphate. The sequence is that of Carbamoyl phosphate synthase large chain from Sulfurisphaera tokodaii (strain DSM 16993 / JCM 10545 / NBRC 100140 / 7) (Sulfolobus tokodaii).